Here is a 284-residue protein sequence, read N- to C-terminus: Lipase chaperone (284 aa).

A helical transmembrane segment spans residues 4–24 (IAWSLGILVTIGALCAIVWPS).

Belongs to the lipase chaperone family.

Its subcellular location is the cell inner membrane. Functionally, may be involved in the folding of the extracellular lipase during its passage through the periplasm. The sequence is that of Lipase chaperone (lifO) from Vibrio cholerae serotype O1 (strain ATCC 39315 / El Tor Inaba N16961).